Here is a 468-residue protein sequence, read N- to C-terminus: Acetyl-CoA decarbonylase/synthase complex subunit gamma 1 (468 aa).

The region spanning 1–61 is the 4Fe-4S domain; sequence MKINSPLEAY…YAKKLAELDR (61 aa). 4 residues coordinate [4Fe-4S] cluster: Cys18, Cys21, Cys26, and Cys43.

In terms of assembly, heterodimer of delta and gamma chains. The ACDS complex is made up of alpha, epsilon, beta, gamma and delta chains with a probable stoichiometry of (alpha(2)epsilon(2))(4)-beta(8)-(gamma(1)delta(1))(8). Corrinoid serves as cofactor. [4Fe-4S] cluster is required as a cofactor.

It carries out the reaction 5,6,7,8-tetrahydrosarcinapterin + methyl-Co(III)-[corrinoid Fe-S protein] = 5-methyltetrahydrosarcinapterin + Co(I)-[corrinoid Fe-S protein] + H(+). It participates in one-carbon metabolism; methanogenesis from acetate. Its function is as follows. Part of a complex that catalyzes the reversible cleavage of acetyl-CoA, allowing growth on acetate as sole source of carbon and energy. This Methanosarcina thermophila protein is Acetyl-CoA decarbonylase/synthase complex subunit gamma 1.